A 209-amino-acid polypeptide reads, in one-letter code: Probable GTP-binding protein EngB (209 aa).

One can recognise an EngB-type G domain in the interval 22–198 (TPLEIAFVGR…NRTVGSWFDA (177 aa)). 2 residues coordinate Mg(2+): serine 37 and threonine 59.

Belongs to the TRAFAC class TrmE-Era-EngA-EngB-Septin-like GTPase superfamily. EngB GTPase family. The cofactor is Mg(2+).

Its function is as follows. Necessary for normal cell division and for the maintenance of normal septation. In Neisseria meningitidis serogroup C (strain 053442), this protein is Probable GTP-binding protein EngB.